The chain runs to 490 residues: Endoglucanase 13 (490 aa).

The N-terminal stretch at 1–26 (MSQLKNGSSQCLWTSICIVLIVMSMA) is a signal peptide. Asparagine 6 carries an N-linked (GlcNAc...) asparagine glycan. Aspartate 86 (nucleophile) is an active-site residue. Residues histidine 412, aspartate 464, and glutamate 473 contribute to the active site.

The protein belongs to the glycosyl hydrolase 9 (cellulase E) family.

It is found in the secreted. It carries out the reaction Endohydrolysis of (1-&gt;4)-beta-D-glucosidic linkages in cellulose, lichenin and cereal beta-D-glucans.. The chain is Endoglucanase 13 from Arabidopsis thaliana (Mouse-ear cress).